Consider the following 515-residue polypeptide: Zinc-binding protein AdcA (515 aa).

The N-terminal stretch at 1-28 is a signal peptide; the sequence is MKKKILLMMSLISVFFAWQLTQAKQVLA. His-66 contributes to the Zn(2+) binding site. The segment at 125 to 148 is disordered; it reads DHHHEDADKKHEHNKHSEEGHNHA. A his-rich loop region spans residues 129-148; that stretch reads EDADKKHEHNKHSEEGHNHA. Residues His-152, His-216, and Glu-291 each coordinate Zn(2+).

Belongs to the bacterial solute-binding protein 9 family.

Its function is as follows. Part of the ATP-binding cassette (ABC) transport system AdcABC involved in zinc import. Binds zinc with high affinity and specificity and delivers it to the membrane permease for translocation into the cytoplasm. This chain is Zinc-binding protein AdcA (adcA), found in Streptococcus pyogenes serotype M18 (strain MGAS8232).